The following is a 214-amino-acid chain: Cytochrome c biogenesis ATP-binding export protein CcmA (214 aa).

The ABC transporter domain occupies 4–214 (LAVDQLTVSR…FDHGFDGAFL (211 aa)). 36-43 (GPNGIGKT) lines the ATP pocket.

This sequence belongs to the ABC transporter superfamily. CcmA exporter (TC 3.A.1.107) family. The complex is composed of two ATP-binding proteins (CcmA) and two transmembrane proteins (CcmB).

Its subcellular location is the cell inner membrane. The enzyme catalyses heme b(in) + ATP + H2O = heme b(out) + ADP + phosphate + H(+). Its function is as follows. Part of the ABC transporter complex CcmAB involved in the biogenesis of c-type cytochromes; once thought to export heme, this seems not to be the case, but its exact role is uncertain. Responsible for energy coupling to the transport system. The protein is Cytochrome c biogenesis ATP-binding export protein CcmA of Rhodobacter capsulatus (strain ATCC BAA-309 / NBRC 16581 / SB1003).